The sequence spans 210 residues: Large ribosomal subunit protein uL4 (210 aa).

A compositionally biased stretch (polar residues) spans 44–54 (QRQGTASTLTR). The tract at residues 44 to 96 (QRQGTASTLTRSEVRGGGRKPYKQKGTGRARQGSIRTPLRPGGGVIFGPKPRS) is disordered. Residues 60-71 (GGRKPYKQKGTG) are compositionally biased toward basic residues.

This sequence belongs to the universal ribosomal protein uL4 family. Part of the 50S ribosomal subunit.

In terms of biological role, one of the primary rRNA binding proteins, this protein initially binds near the 5'-end of the 23S rRNA. It is important during the early stages of 50S assembly. It makes multiple contacts with different domains of the 23S rRNA in the assembled 50S subunit and ribosome. Its function is as follows. Forms part of the polypeptide exit tunnel. The sequence is that of Large ribosomal subunit protein uL4 from Prochlorococcus marinus (strain MIT 9515).